Reading from the N-terminus, the 317-residue chain is tRNA dimethylallyltransferase (317 aa).

19–26 lines the ATP pocket; it reads GPTASGKS. 21–26 is a binding site for substrate; that stretch reads TASGKS. Residues 49–52 are interaction with substrate tRNA; the sequence is DSAQ.

It belongs to the IPP transferase family. In terms of assembly, monomer. Mg(2+) is required as a cofactor.

The enzyme catalyses adenosine(37) in tRNA + dimethylallyl diphosphate = N(6)-dimethylallyladenosine(37) in tRNA + diphosphate. In terms of biological role, catalyzes the transfer of a dimethylallyl group onto the adenine at position 37 in tRNAs that read codons beginning with uridine, leading to the formation of N6-(dimethylallyl)adenosine (i(6)A). This is tRNA dimethylallyltransferase from Erythrobacter litoralis (strain HTCC2594).